Here is a 461-residue protein sequence, read N- to C-terminus: Anthocyanidin 3-O-glucoside 5-O-glucosyltransferase (461 aa).

Residues methionine 1–glycine 15 form the signal peptide. The active-site Proton acceptor is the histidine 16. Residue histidine 16 coordinates an anthocyanidin. UDP-alpha-D-glucose contacts are provided by glutamine 338, histidine 353, tryptophan 356, asparagine 357, serine 358, glutamate 361, aspartate 377, and glutamine 378.

This sequence belongs to the UDP-glycosyltransferase family.

The enzyme catalyses an anthocyanidin 3-O-beta-D-glucoside + UDP-alpha-D-glucose = an anthocyanidin 3,5-di-O-beta-D-glucoside + UDP + 2 H(+). The protein operates within pigment biosynthesis; anthocyanin biosynthesis. Its function is as follows. Catalyzes the glucosylation at the O-5 position of anthocyanidin 3-glucosides to form anthocyanidin 3,5-di-O-glucosides using UDP-glucose as sugar donor. Anthocyanidin 3,5-di-O-glucosides are molecules that are responsible for pigmentation. Also acts on anthocyanidin 3-O-(6-O-malonylglucoside). Much less active with hydroxycinnamoylglucose derivatives. No activity in the absence of the 3-O-glucoside group. This is Anthocyanidin 3-O-glucoside 5-O-glucosyltransferase (HGT8) from Verbena hybrida (Garden vervain).